A 316-amino-acid polypeptide reads, in one-letter code: Glycine--tRNA ligase alpha subunit (316 aa).

It belongs to the class-II aminoacyl-tRNA synthetase family. Tetramer of two alpha and two beta subunits.

The protein resides in the cytoplasm. The enzyme catalyses tRNA(Gly) + glycine + ATP = glycyl-tRNA(Gly) + AMP + diphosphate. The protein is Glycine--tRNA ligase alpha subunit of Cupriavidus taiwanensis (strain DSM 17343 / BCRC 17206 / CCUG 44338 / CIP 107171 / LMG 19424 / R1) (Ralstonia taiwanensis (strain LMG 19424)).